The following is a 508-amino-acid chain: N-acetyl-D-hexosamine oxidase (508 aa).

Residues 26 to 203 form the FAD-binding PCMH-type domain; the sequence is TDAQAAGRIA…TAYTFARLPE (178 aa). Residues 64-123 constitute a cross-link (6-(S-cysteinyl)-8alpha-(pros-histidyl)-FAD (His-Cys)); the sequence is HCYEDFVSNNPDGAIVDLSLLNAPEVRADGTVRIPAGTQNWNGYLELYKRHNLTLPGGSC.

The protein belongs to the oxygen-dependent FAD-linked oxidoreductase family. It depends on FAD as a cofactor.

The enzyme catalyses N-acetyl-D-glucosamine + O2 + H2O = N-acetyl-D-glucosaminate + H2O2 + H(+). It catalyses the reaction N-acetyl-D-galactosamine + O2 + H2O = N-acetyl-D-galactosaminate + H2O2 + H(+). It carries out the reaction N-acetyl-D-glucosamine + O2 = N-acetyl-D-glucosamino-1,5-lactone + H2O2. The catalysed reaction is N-acetyl-D-galactosamine + O2 = N-acetyl-D-galactosamino-1,5-lactone + H2O2. Its function is as follows. Catalyzes the oxidation of a range of monosaccharides in vitro, displaying the highest activity with N-acetylglucosamine (GlcNAc) and N-acetylgalactosamine (GalNAc), with a reduction of O2 to H2O2. Acts upon the C1 carbon of the GlcNAc or GalNAc molecule, producing the corresponding lactone, which can spontaneously hydrolyze. Its biological function is unclear, but its main function might be connected to extracellular production of hydrogen peroxide to compete with other organisms through oxidative stress, or support the action of peroxidases and peroxygenases. The sequence is that of N-acetyl-D-hexosamine oxidase from Ralstonia solanacearum (strain UW551).